The sequence spans 322 residues: 4-hydroxythreonine-4-phosphate dehydrogenase (322 aa).

Positions 131 and 132 each coordinate substrate. A divalent metal cation-binding residues include His-161, His-206, and His-259. Substrate is bound by residues Lys-267, Asn-276, and Arg-285.

It belongs to the PdxA family. In terms of assembly, homodimer. The cofactor is a divalent metal cation.

The protein localises to the cytoplasm. The enzyme catalyses 4-(phosphooxy)-L-threonine + NAD(+) = 3-amino-2-oxopropyl phosphate + CO2 + NADH. Its pathway is cofactor biosynthesis; pyridoxine 5'-phosphate biosynthesis; pyridoxine 5'-phosphate from D-erythrose 4-phosphate: step 4/5. Functionally, catalyzes the NAD(P)-dependent oxidation of 4-(phosphooxy)-L-threonine (HTP) into 2-amino-3-oxo-4-(phosphooxy)butyric acid which spontaneously decarboxylates to form 3-amino-2-oxopropyl phosphate (AHAP). In Sulfurihydrogenibium sp. (strain YO3AOP1), this protein is 4-hydroxythreonine-4-phosphate dehydrogenase.